Consider the following 509-residue polypeptide: Maturase K (509 aa).

The protein belongs to the intron maturase 2 family. MatK subfamily.

The protein resides in the plastid. It is found in the chloroplast. Functionally, usually encoded in the trnK tRNA gene intron. Probably assists in splicing its own and other chloroplast group II introns. This is Maturase K from Nicotiana sylvestris (Wood tobacco).